We begin with the raw amino-acid sequence, 200 residues long: 3-isopropylmalate dehydratase small subunit (200 aa).

The protein belongs to the LeuD family. LeuD type 1 subfamily. Heterodimer of LeuC and LeuD.

It carries out the reaction (2R,3S)-3-isopropylmalate = (2S)-2-isopropylmalate. It participates in amino-acid biosynthesis; L-leucine biosynthesis; L-leucine from 3-methyl-2-oxobutanoate: step 2/4. Its function is as follows. Catalyzes the isomerization between 2-isopropylmalate and 3-isopropylmalate, via the formation of 2-isopropylmaleate. This chain is 3-isopropylmalate dehydratase small subunit, found in Erythrobacter litoralis (strain HTCC2594).